The primary structure comprises 361 residues: Peptide chain release factor 1 (361 aa).

Residue Gln-235 is modified to N5-methylglutamine.

It belongs to the prokaryotic/mitochondrial release factor family. In terms of processing, methylated by PrmC. Methylation increases the termination efficiency of RF1.

It is found in the cytoplasm. Functionally, peptide chain release factor 1 directs the termination of translation in response to the peptide chain termination codons UAG and UAA. This chain is Peptide chain release factor 1, found in Azoarcus sp. (strain BH72).